Consider the following 1212-residue polypeptide: uncharacterized protein (1212 aa).

The span at 1-31 shows a compositional bias: polar residues; it reads MASIQTKLVSQPQTQQPLQNGFFNNYQQNIY. Disordered regions lie at residues 1 to 70, 119 to 169, 211 to 231, 248 to 374, 655 to 681, 935 to 957, and 973 to 1125; these read MASI…HLQQ, PQAQ…FGTN, SLNN…SNNN, INIG…NNNK, QQQP…TQQQ, NQNQ…CNNA, and QLQP…QQLQ. Composition is skewed to low complexity over residues 48-70 and 119-163; these read PQQQ…HLQQ and PQAQ…NNNN. Low complexity predominate over residues 256-275; it reads NNSNTNNVNNINTNNTNNNN. Polar residues-rich tracts occupy residues 276–285 and 292–317; these read KSGSIDQFGS and YVNS…SHSP. The segment covering 322-340 has biased composition (low complexity); that stretch reads INSNININSNLQSPQNIQQ. A compositionally biased stretch (polar residues) spans 341–351; it reads TILSPNISPNH. The span at 352-373 shows a compositional bias: low complexity; it reads NNNNNNNNNNNNNNNNNNNNNN. Composition is skewed to low complexity over residues 998-1022 and 1037-1125; these read NSVN…NNNN and QNNN…QQLQ.

This is an uncharacterized protein from Dictyostelium discoideum (Social amoeba).